Consider the following 257-residue polypeptide: AN1-type zinc finger protein 2B (257 aa).

2 AN1-type zinc fingers span residues 4–52 (PDLG…QKDI) and 94–142 (KIFT…HQTS). Zn(2+) is bound by residues Cys-10, Cys-15, Cys-25, Cys-28, Cys-33, His-36, His-42, Cys-44, Cys-100, Cys-105, Cys-115, Cys-118, Cys-123, His-126, His-132, and Cys-134. The interval 141 to 151 (TSRAGLAAISR) is VCP/p97-interacting motif (VIM). The segment at 152–184 (AQGLASTSTAPSPSRTLPSSSSPSRATPQLPTR) is disordered. The span at 155–179 (LASTSTAPSPSRTLPSSSSPSRATP) shows a compositional bias: low complexity. Phosphoserine; by MAPK14 is present on residues Ser-163, Ser-173, and Ser-187. UIM domains lie at 197–216 (SEDEALQRALELSLAEAKPQ) and 221–240 (QEEDDLALAQALSASEAEYQ). Position 254 is a cysteine methyl ester (Cys-254). The S-geranylgeranyl cysteine moiety is linked to residue Cys-254. A CAAX motif motif is present at residues 254-257 (CSLC). Residues 255–257 (SLC) constitute a propeptide, removed in mature form.

In terms of assembly, binds 'Lys-48'-linked polyubiquitin chains of ubiquitinated proteins. Associates with the proteasome complex; upon exposure to arsenite. Interacts (via VIM motif) with VCP; the interaction is direct. Interacts with BAG6. Interacts with IGF1R (nascent precursor form). Interacts with DERL1, FAF2, NPLOC4 and UFD1; probably through VCP. In terms of processing, phosphorylated by MAPK14. Phosphorylation has no effect on association with the proteasome complex.

The protein localises to the endoplasmic reticulum membrane. Its function is as follows. Plays a role in protein homeostasis by regulating both the translocation and the ubiquitin-mediated proteasomal degradation of nascent proteins at the endoplasmic reticulum. It is involved in the regulation of signal-mediated translocation of proteins into the endoplasmic reticulum. It also plays a role in the ubiquitin-mediated proteasomal degradation of proteins for which signal-mediated translocation to the endoplasmic reticulum has failed. May therefore function in the endoplasmic reticulum stress-induced pre-emptive quality control, a mechanism that selectively attenuates the translocation of newly synthesized proteins into the endoplasmic reticulum and reroutes them to the cytosol for proteasomal degradation. By controlling the steady-state expression of the IGF1R receptor, indirectly regulates the insulin-like growth factor receptor signaling pathway. This chain is AN1-type zinc finger protein 2B, found in Mus musculus (Mouse).